Reading from the N-terminus, the 623-residue chain is Interleukin-27 receptor subunit alpha (623 aa).

The first 24 residues, 1 to 24, serve as a signal peptide directing secretion; the sequence is MNRLRVARLTPLELLLSLMSLLLG. The Extracellular portion of the chain corresponds to 25 to 510; it reads TRPHGSPGPL…HLPDNRIRWK (486 aa). 2 consecutive Fibronectin type-III domains span residues 30–124 and 125–225; these read SPGP…MKPD and TPQI…TPFL. Residue N46 is glycosylated (N-linked (GlcNAc...) asparagine). A WSXWS motif motif is present at residues 211–215; the sequence is WGEWS. N-linked (GlcNAc...) asparagine glycans are attached at residues N296, N305, N360, N368, and N461. Fibronectin type-III domains are found at residues 316-412 and 413-505; these read APCD…VPLA and GPAV…LPDN. Residues 511-531 form a helical membrane-spanning segment; it reads ALPWFLSLWGLLLMGCGLSLA. Residues 532 to 623 lie on the Cytoplasmic side of the membrane; the sequence is STRCLQARCL…PTPEELGLLV (92 aa). The Box 1 motif motif lies at 552-560; sequence IWERVPDPA.

It belongs to the type I cytokine receptor family. Type 2 subfamily. In terms of tissue distribution, expressed in CD4+ and CD8+ T-cells, B-cells, natural killer cells and macrophages. Highest levels in CD4+ T-cells and natural killer cells. Expression highest in Th0 cells.

Its subcellular location is the membrane. In terms of biological role, receptor for IL27. Requires IL6ST/GP130 to mediate signal transduction in response to IL27. This signaling system acts through STAT3 and STAT1. Involved in the regulation of Th1-type immune responses. Also appears to be involved in innate defense mechanisms. The protein is Interleukin-27 receptor subunit alpha (Il27ra) of Mus musculus (Mouse).